The following is a 229-amino-acid chain: Germin-like protein 3-6 (229 aa).

A signal peptide spans 1-31 (MEHSFKTIAAGVVIVVLLLQQAPVLIRATDA). Cysteines 38 and 53 form a disulfide. In terms of domain architecture, Cupin type-1 spans 67–219 (SKIATGGDVN…ALRVDAGVVE (153 aa)). 2 N-linked (GlcNAc...) asparagine glycosylation sites follow: Asn80 and Asn83. Mn(2+) is bound by residues His116, His118, Glu123, and His165.

This sequence belongs to the germin family. In terms of assembly, oligomer (believed to be a pentamer but probably hexamer).

It localises to the secreted. It is found in the extracellular space. Its subcellular location is the apoplast. May play a role in plant defense. Probably has no oxalate oxidase activity even if the active site is conserved. The sequence is that of Germin-like protein 3-6 from Oryza sativa subsp. japonica (Rice).